Consider the following 645-residue polypeptide: Acetyl-coenzyme A synthetase (645 aa).

Residues 190–193 and T309 contribute to the CoA site; that span reads RGGR. ATP is bound by residues 385 to 387, 409 to 414, D498, and R513; these read GEP and DTWWQT. S521 contacts CoA. R524 serves as a coordination point for ATP. Mg(2+) is bound by residues V535, H537, and V540. Residue R582 coordinates CoA. The residue at position 607 (K607) is an N6-acetyllysine.

Belongs to the ATP-dependent AMP-binding enzyme family. Mg(2+) is required as a cofactor. Post-translationally, acetylated. Deacetylation by the SIR2-homolog deacetylase activates the enzyme.

It catalyses the reaction acetate + ATP + CoA = acetyl-CoA + AMP + diphosphate. Catalyzes the conversion of acetate into acetyl-CoA (AcCoA), an essential intermediate at the junction of anabolic and catabolic pathways. AcsA undergoes a two-step reaction. In the first half reaction, AcsA combines acetate with ATP to form acetyl-adenylate (AcAMP) intermediate. In the second half reaction, it can then transfer the acetyl group from AcAMP to the sulfhydryl group of CoA, forming the product AcCoA. In Methylocella silvestris (strain DSM 15510 / CIP 108128 / LMG 27833 / NCIMB 13906 / BL2), this protein is Acetyl-coenzyme A synthetase.